The following is a 283-amino-acid chain: Elongation factor Ts (283 aa).

The segment at 79 to 82 (TDFV) is involved in Mg(2+) ion dislocation from EF-Tu.

This sequence belongs to the EF-Ts family.

Its subcellular location is the cytoplasm. Its function is as follows. Associates with the EF-Tu.GDP complex and induces the exchange of GDP to GTP. It remains bound to the aminoacyl-tRNA.EF-Tu.GTP complex up to the GTP hydrolysis stage on the ribosome. This Shewanella denitrificans (strain OS217 / ATCC BAA-1090 / DSM 15013) protein is Elongation factor Ts.